A 125-amino-acid polypeptide reads, in one-letter code: Type II secretion system protein I (125 aa).

The propeptide at 1 to 5 (MKQQG) is leader sequence. Met-6 carries the post-translational modification N-methylmethionine. A helical transmembrane segment spans residues 6 to 26 (MTLLEVMVALVIFALAGLTVL).

The protein belongs to the GSP I family. In terms of assembly, type II secretion is composed of four main components: the outer membrane complex, the inner membrane complex, the cytoplasmic secretion ATPase and the periplasm-spanning pseudopilus. Interacts with core component OutG. In terms of processing, cleaved by prepilin peptidase. Post-translationally, methylated by prepilin peptidase at the amino group of the N-terminal methionine once the leader sequence is cleaved by prepilin peptidase.

The protein resides in the cell inner membrane. In terms of biological role, component of the type II secretion system required for the energy-dependent secretion of extracellular factors such as proteases and toxins from the periplasm. Part of the pseudopilus tip complex that is critical for the recognition and binding of secretion substrates. This is Type II secretion system protein I (outI) from Dickeya chrysanthemi (Pectobacterium chrysanthemi).